The sequence spans 823 residues: Hypoxia-inducible factor 1-alpha (823 aa).

The disordered stretch occupies residues 1–30 (MEGAGGANDKKKISSERRKEKSRDAARSRR). Residues 1–401 (MEGAGGANDK…KEPDALTLLA (401 aa)) are interaction with TSGA10. The segment covering 8-30 (NDKKKISSERRKEKSRDAARSRR) has biased composition (basic and acidic residues). The bHLH domain maps to 17–70 (RRKEKSRDAARSRRSKESEVFYELAHQLPLPHNVSSHLDKASVMRLTISYLRVR). A DNA-binding region spans residues 21–30 (KSRDAARSRR). A PAS 1 domain is found at 85–158 (KAQMNCFYLK…THRNGLVKKG (74 aa)). Residues 170–191 (RMKCTLTSRGRTMNIKSATWKV) are required for heterodimer formation with ARNT. In terms of domain architecture, PAS 2 spans 228-298 (PHPSNIEIPL…KTHHDMFTKG (71 aa)). A Phosphoserine; by CK1 modification is found at serine 247. The 44-residue stretch at 302–345 (TGQYRMLAKRGGYVWIETQATVIYNTKNSQPQCIVCVNYVVSGI) folds into the PAC domain. An ODD region spans residues 401-600 (APAAGDTIIS…QSASTNTVFQ (200 aa)). Proline 402 carries the post-translational modification 4-hydroxyproline. Residues 494–517 (IQDQPASPSDGSTRQSSPEPNSPS) show a composition bias toward polar residues. Residues 494–521 (IQDQPASPSDGSTRQSSPEPNSPSEYCF) form a disordered region. An NTAD region spans residues 531–575 (FKLELVEKLFAEDTEAKNPFSTQDTDLDLEMLAPYIPMDDDFQLR). Lysine 532 carries the post-translational modification N6-acetyllysine; alternate. Lysine 532 participates in a covalent cross-link: Glycyl lysine isopeptide (Lys-Gly) (interchain with G-Cter in ubiquitin); alternate. Glycyl lysine isopeptide (Lys-Gly) (interchain with G-Cter in ubiquitin) cross-links involve residues lysine 538 and lysine 547. Serine 551 carries the phosphoserine; by GSK3-beta modification. A Phosphothreonine; by GSK3-beta modification is found at threonine 555. Residue proline 564 is modified to 4-hydroxyproline. Serine 576 carries the phosphoserine; by PLK3 modification. Positions 576 to 782 (SFDQLSPLEN…SDLACRLLGQ (207 aa)) are ID. Disordered regions lie at residues 581–602 (SPLENSSTSPQSASTNTVFQPT) and 639–685 (PSPP…PRSP). A Phosphoserine; by GSK3-beta modification is found at serine 589. Residues 651-666 (ATTSPYSDTGSRTASP) show a composition bias toward polar residues. Serine 654 is subject to Phosphoserine; by PLK3. Lysine 706 carries the N6-acetyllysine modification. The short motif at 715–721 (RKRKIEH) is the Nuclear localization signal element. The interval 783–823 (SMDESGLPQLTSYDCEVNAPIQGSRNLLQGEELLRALDQVN) is CTAD. At cysteine 797 the chain carries S-nitrosocysteine. Residue asparagine 800 is modified to (3S)-3-hydroxyasparagine.

In terms of assembly, interacts with the ARNT; forms a heterodimer that binds core DNA sequence 5'-TACGTG-3' within the hypoxia response element (HRE) of target gene promoters. Interacts with COPS5; the interaction increases the transcriptional activity of HIF1A through increased stability. Interacts with EP300 (via TAZ-type 1 domains); the interaction is stimulated in response to hypoxia and inhibited by CITED2. Interacts with CREBBP (via TAZ-type 1 domains). Interacts with NCOA1, NCOA2, APEX1 and HSP90. Interacts (hydroxylated within the ODD domain) with VHLL (via beta domain); the interaction, leads to polyubiquitination and subsequent HIF1A proteasomal degradation. During hypoxia, sumoylated HIF1A also binds VHL; the interaction promotes the ubiquitination of HIF1A. Interacts with SENP1; the interaction desumoylates HIF1A resulting in stabilization and activation of transcription. Interacts (via the ODD domain) with NAA10; the interaction appears not to acetylate HIF1A nor have any affect on protein stability, during hypoxia. Interacts with RWDD3; the interaction enhances HIF1A sumoylation. Interacts with TSGA10. Interacts with HIF3A. Interacts with RORA (via the DNA binding domain); the interaction enhances HIF1A transcription under hypoxia through increasing protein stability. Interaction with PSMA7 inhibits the transactivation activity of HIF1A under both normoxic and hypoxia-mimicking conditions. Interacts with USP20. Interacts with RACK1; promotes HIF1A ubiquitination and proteasome-mediated degradation. Interacts (via N-terminus) with USP19. Interacts with SIRT2. Interacts (deacetylated form) with EGLN1. Interacts with CBFA2T3. Interacts with HSP90AA1 and HSP90AB1. Interacts with DCUN1D1; this interaction increases the interaction between VHL and DCUN1D1. Interacts with HIF1AN. Post-translationally, S-nitrosylation of Cys-797 may be responsible for increased recruitment of p300 coactivator necessary for transcriptional activity of HIF-1 complex. Acetylation of Lys-532 by ARD1 increases interaction with VHL and stimulates subsequent proteasomal degradation. Deacetylation of Lys-706 by SIRT2 increases its interaction with and hydroxylation by EGLN1 thereby inactivating HIF1A activity by inducing its proteasomal degradation. In terms of processing, ubiquitinated; in normoxia, following hydroxylation and interaction with VHL. Lys-532 appears to be the principal site of ubiquitination. Clioquinol, the Cu/Zn-chelator, inhibits ubiquitination through preventing hydroxylation at Asn-800. Ubiquitinated by E3 ligase VHL. Deubiquitinated by UCHL1. Post-translationally, requires phosphorylation for DNA-binding. Phosphorylation at Ser-247 by CSNK1D/CK1 represses kinase activity and impairs ARNT binding. Phosphorylation by GSK3-beta and PLK3 promote degradation by the proteasome. The iron and 2-oxoglutarate dependent 3-hydroxylation of asparagine is (S) stereospecific within HIF CTAD domains. In terms of processing, sumoylated; with SUMO1 under hypoxia. Sumoylation is enhanced through interaction with RWDD3. Both sumoylation and desumoylation seem to be involved in the regulation of its stability during hypoxia. Sumoylation can promote either its stabilization or its VHL-dependent degradation by promoting hydroxyproline-independent HIF1A-VHL complex binding, thus leading to HIF1A ubiquitination and proteasomal degradation. Desumoylation by SENP1 increases its stability amd transcriptional activity. There is a disaccord between various publications on the effect of sumoylation and desumoylation on its stability and transcriptional activity. Post-translationally, in normoxia, is hydroxylated on Pro-402 and Pro-564 in the oxygen-dependent degradation domain (ODD) by EGLN1/PHD2 and EGLN2/PHD1. EGLN3/PHD3 has also been shown to hydroxylate Pro-564. The hydroxylated prolines promote interaction with VHL, initiating rapid ubiquitination and subsequent proteasomal degradation. Deubiquitinated by USP20. Under hypoxia, proline hydroxylation is impaired and ubiquitination is attenuated, resulting in stabilization. In normoxia, is hydroxylated on Asn-800 by HIF1AN, thus abrogating interaction with CREBBP and EP300 and preventing transcriptional activation. Repressed by iron ion, via Fe(2+) prolyl hydroxylase (PHD) enzymes-mediated hydroxylation and subsequent proteasomal degradation.

The protein localises to the cytoplasm. It localises to the nucleus. With respect to regulation, induced by reactive oxygen species (ROS). Functions as a master transcriptional regulator of the adaptive response to hypoxia. Under hypoxic conditions, activates the transcription of over 40 genes, including erythropoietin, glucose transporters, glycolytic enzymes, vascular endothelial growth factor, HILPDA, and other genes whose protein products increase oxygen delivery or facilitate metabolic adaptation to hypoxia. Plays an essential role in embryonic vascularization, tumor angiogenesis and pathophysiology of ischemic disease. Heterodimerizes with ARNT; heterodimer binds to core DNA sequence 5'-TACGTG-3' within the hypoxia response element (HRE) of target gene promoters. Activation requires recruitment of transcriptional coactivators such as CREBBP and EP300. Activity is enhanced by interaction with NCOA1 and/or NCOA2. Interaction with redox regulatory protein APEX1 seems to activate CTAD and potentiates activation by NCOA1 and CREBBP. Involved in the axonal distribution and transport of mitochondria in neurons during hypoxia. This Bos taurus (Bovine) protein is Hypoxia-inducible factor 1-alpha (HIF1A).